The chain runs to 179 residues: ATP synthase subunit b (179 aa).

Residues 27-47 (TAITFLVMLAVLAKFAWGPIV) traverse the membrane as a helical segment.

The protein belongs to the ATPase B chain family. As to quaternary structure, F-type ATPases have 2 components, F(1) - the catalytic core - and F(0) - the membrane proton channel. F(1) has five subunits: alpha(3), beta(3), gamma(1), delta(1), epsilon(1). F(0) has three main subunits: a(1), b(2) and c(10-14). The alpha and beta chains form an alternating ring which encloses part of the gamma chain. F(1) is attached to F(0) by a central stalk formed by the gamma and epsilon chains, while a peripheral stalk is formed by the delta and b chains.

The protein localises to the cell inner membrane. Its function is as follows. F(1)F(0) ATP synthase produces ATP from ADP in the presence of a proton or sodium gradient. F-type ATPases consist of two structural domains, F(1) containing the extramembraneous catalytic core and F(0) containing the membrane proton channel, linked together by a central stalk and a peripheral stalk. During catalysis, ATP synthesis in the catalytic domain of F(1) is coupled via a rotary mechanism of the central stalk subunits to proton translocation. In terms of biological role, component of the F(0) channel, it forms part of the peripheral stalk, linking F(1) to F(0). The chain is ATP synthase subunit b from Anaeromyxobacter dehalogenans (strain 2CP-C).